We begin with the raw amino-acid sequence, 396 residues long: L-cysteine desulfidase (396 aa).

Cys-23 serves as the catalytic Proton acceptor. The [4Fe-4S] cluster site is built by Cys-287, Cys-329, and Cys-336.

The protein belongs to the L-cysteine desulfidase family. As to quaternary structure, homotrimer. It depends on [4Fe-4S] cluster as a cofactor.

It carries out the reaction L-cysteine + H2O = hydrogen sulfide + pyruvate + NH4(+) + H(+). Catalyzes the cleavage of L-cysteine to form 2-aminoprop-2-enoate and sulfide. The former then spontaneously hydrolyzes to pyruvate and NH(3). May be responsible for the production of sulfide required for the biosynthesis of iron-sulfur centers in this archaea. The sequence is that of L-cysteine desulfidase from Methanococcus maripaludis (strain DSM 14266 / JCM 13030 / NBRC 101832 / S2 / LL).